The following is a 38-amino-acid chain: Photosystem II reaction center protein L (38 aa).

Residues 17-37 form a helical membrane-spanning segment; that stretch reads SLYWGLLLIFVLAVLFSSYIF.

The protein belongs to the PsbL family. In terms of assembly, PSII is composed of 1 copy each of membrane proteins PsbA, PsbB, PsbC, PsbD, PsbE, PsbF, PsbH, PsbI, PsbJ, PsbK, PsbL, PsbM, PsbT, PsbY, PsbZ, Psb30/Ycf12, at least 3 peripheral proteins of the oxygen-evolving complex and a large number of cofactors. It forms dimeric complexes.

The protein localises to the plastid. It localises to the chloroplast thylakoid membrane. Its function is as follows. One of the components of the core complex of photosystem II (PSII). PSII is a light-driven water:plastoquinone oxidoreductase that uses light energy to abstract electrons from H(2)O, generating O(2) and a proton gradient subsequently used for ATP formation. It consists of a core antenna complex that captures photons, and an electron transfer chain that converts photonic excitation into a charge separation. This subunit is found at the monomer-monomer interface and is required for correct PSII assembly and/or dimerization. In Euglena gracilis, this protein is Photosystem II reaction center protein L.